We begin with the raw amino-acid sequence, 152 residues long: Regulatory protein RecX (152 aa).

This sequence belongs to the RecX family.

The protein resides in the cytoplasm. Functionally, modulates RecA activity. This chain is Regulatory protein RecX, found in Haemophilus influenzae (strain 86-028NP).